The following is a 417-amino-acid chain: MAEIKNYTLNFGPQHPAAHGVLRLILELDGEVIQRADPHIGLLHRATEKLAESKTYIQSLPYMDRLDYVSMMCNEHAYCLAIEKLLGVDVPVRAQYIRVMFSEITRILNHLLWIGAHGLDCGAMNILIYAFREREDLFDMYEAVSGARMHAAYFRPGGVYRDLPDTMPQYRVSKIRNAKALAKMNENRQGSLLDFIEDFCRRFPKNVDDYETLLTDNRIWKQRTVGIGVVTPERALNLGFTGPMLRGSGIAWDLRKTQPYDVYDRVDFDIPVGAGGDCYDRYLVRVEELRQSNRIIQQCAAWLRANPGPVITDNHKVAAPGRVDMKSNMEELIHHFKLFTEGFHVPEGEAYAAVEHPKGEFGIYLVSDGANKPYRLKIRAPGFAHLAAMDEMSRGHMIADAVAVIGTMDIVFGEIDR.

This sequence belongs to the complex I 49 kDa subunit family. In terms of assembly, NDH-1 is composed of 14 different subunits. Subunits NuoB, C, D, E, F, and G constitute the peripheral sector of the complex.

Its subcellular location is the cell inner membrane. It carries out the reaction a quinone + NADH + 5 H(+)(in) = a quinol + NAD(+) + 4 H(+)(out). NDH-1 shuttles electrons from NADH, via FMN and iron-sulfur (Fe-S) centers, to quinones in the respiratory chain. The immediate electron acceptor for the enzyme in this species is believed to be ubiquinone. Couples the redox reaction to proton translocation (for every two electrons transferred, four hydrogen ions are translocated across the cytoplasmic membrane), and thus conserves the redox energy in a proton gradient. The polypeptide is NADH-quinone oxidoreductase subunit D (Methylibium petroleiphilum (strain ATCC BAA-1232 / LMG 22953 / PM1)).